A 1759-amino-acid chain; its full sequence is Replicase polyprotein (1759 aa).

The region spanning 23–90 (DKISTLKMVA…ARQMLLLLSG (68 aa)) is the DRBM domain. The stretch at 113-140 (YTRLEKAIERRDDKIKTLIKELRRQIKN) forms a coiled coil. The SF3 helicase domain maps to 421–595 (AKQLYEYVSC…KEYGIETEKG (175 aa)). Residue 449-456 (GESGVGKT) coordinates ATP. Positions 950 to 1191 (DAAHNLMIDV…YACPLTQECL (242 aa)) constitute a Peptidase C3 domain. Catalysis depends on for picornain 3C-like protease activity residues histidine 994, aspartate 1054, and cysteine 1152. The 140-residue stretch at 1483–1622 (SHVIAGDFGN…NIDAKVVEWF (140 aa)) folds into the RdRp catalytic domain.

Protein 1A might be expressed through a ribosomal skip from one codon to the next without formation of a peptide bond.

The catalysed reaction is RNA(n) + a ribonucleoside 5'-triphosphate = RNA(n+1) + diphosphate. Protein 1A functions as a suppressor of RNA-mediated gene silencing, an antiviral defense mechanism of insect cells. Binds to long dsRNA and to a lesser extent, to siRNA. Functionally, RNA-directed RNA polymerase replicates genomic and antigenomic RNA. This chain is Replicase polyprotein, found in Drosophila C virus (strain EB) (DCV).